The sequence spans 87 residues: U3-theraphotoxin-Hhn1a 15 (87 aa).

A signal peptide spans 1 to 24 (MVNMKASMFLTFAGLVLLLVVCYA). Positions 25–52 (SESEEKEFPKEMLSSIFAVDNDFKQEER) are excised as a propeptide. 3 cysteine pairs are disulfide-bonded: Cys54–Cys67, Cys61–Cys72, and Cys66–Cys79.

The protein belongs to the neurotoxin 10 (Hwtx-1) family. 51 (Hntx-8) subfamily. Hntx-8 sub-subfamily. Expressed by the venom gland.

The protein resides in the secreted. In terms of biological role, ion channel inhibitor. The protein is U3-theraphotoxin-Hhn1a 15 of Cyriopagopus hainanus (Chinese bird spider).